A 120-amino-acid chain; its full sequence is Small ribosomal subunit protein uS11 (120 aa).

The protein belongs to the universal ribosomal protein uS11 family. As to quaternary structure, part of the 30S ribosomal subunit. Interacts with proteins S7 and S18. Binds to IF-3.

Located on the platform of the 30S subunit, it bridges several disparate RNA helices of the 16S rRNA. Forms part of the Shine-Dalgarno cleft in the 70S ribosome. The protein is Small ribosomal subunit protein uS11 of Neorickettsia sennetsu (strain ATCC VR-367 / Miyayama) (Ehrlichia sennetsu).